The primary structure comprises 384 residues: DNA polymerase IV (384 aa).

The 178-residue stretch at 5 to 182 folds into the UmuC domain; sequence IIHVDMDAFF…LPVTKVHGIG (178 aa). 3 residues coordinate Mg(2+): aspartate 9, methionine 10, and aspartate 103. Residue glutamate 104 is part of the active site.

Belongs to the DNA polymerase type-Y family. Monomer. Mg(2+) is required as a cofactor.

Its subcellular location is the cytoplasm. It catalyses the reaction DNA(n) + a 2'-deoxyribonucleoside 5'-triphosphate = DNA(n+1) + diphosphate. In terms of biological role, poorly processive, error-prone DNA polymerase involved in translesion repair and untargeted mutagenesis. Copies undamaged DNA at stalled replication forks, which arise in vivo from mismatched or misaligned primer ends. These misaligned primers can be extended by PolIV. Exhibits no 3'-5' exonuclease (proofreading) activity. Involved in translesional synthesis. Primer extension fidelity in vitro is temperature-dependent. Inserts a correct base opposite templating bases at 70 degrees Celsius, but at 37 degrees Celsius in addition to correct base pairing, base transitions, transversions and frameshifts can occur. Preferably forms erroneous base pairs C:T. Bypasses 8-oxo-dG oxidative damage by incorporating dATP or dCTP opposite of the damaged DNA template site at both temperatures in vitro. The polypeptide is DNA polymerase IV (Caldanaerobacter subterraneus subsp. tengcongensis (strain DSM 15242 / JCM 11007 / NBRC 100824 / MB4) (Thermoanaerobacter tengcongensis)).